Reading from the N-terminus, the 345-residue chain is MAGLFYLGGRDHNKQDHHQEKDHNEDKSNNYLYLYKDEIYNNNKGFEIFPPQYFQQQQQQNHAAAPTNLYSFGMVPSGGNINNNRSTNRSLYFNVVSDHEPVRSSTGGFTVTRQGNMNCQDCGNQAKKDCPHMRCRTCCKSRGFDCQTHVKSTWVSAAKRRERQAQLAVLPAKRIRDANSRGGGDDDDDDKEDEKNDSCGGGSALACTRVVNASSSGLETSHLPPEISSPAVFRCMRVSSIDDEDEEYAYQTAVSIGGHVFKGILYDQGPSSDHHRYSSSLNGETSHQHHLNLMDSTPSAATTNAVTAVNTNNGSIDPSSLYTAVATPFNAFVAGGTPFFASSRC.

The disordered stretch occupies residues 7 to 28; the sequence is LGGRDHNKQDHHQEKDHNEDKS. Positions 9–28 are enriched in basic and acidic residues; that stretch reads GRDHNKQDHHQEKDHNEDKS. Zn(2+)-binding residues include Cys-119, Cys-122, Cys-130, Cys-135, Cys-139, and Cys-146. The zn(2)-C6 fungal-type; degenerate DNA-binding region spans 119–146; that stretch reads CQDCGNQAKKDCPHMRCRTCCKSRGFDC. The interval 168 to 200 is disordered; it reads AVLPAKRIRDANSRGGGDDDDDDKEDEKNDSCG. The Required for homo- and heterodimerization signature appears at 256 to 259; the sequence is IGGH.

Belongs to the SHI protein family. As to expression, mainly expressed in the filaments of flowers, the shoot apex regions and pollen. Also present in leaves.

Its subcellular location is the nucleus. Its function is as follows. Transcription activator that binds DNA on 5'-ACTCTAC-3' and promotes auxin homeostasis-regulating gene expression (e.g. YUC genes), as well as genes affecting stamen development, cell expansion and timing of flowering. Synergistically with other SHI-related proteins, regulates gynoecium, stamen and leaf development in a dose-dependent manner, controlling apical-basal patterning. Promotes style and stigma formation, and influences vascular development during gynoecium development. May also have a role in the formation and/or maintenance of the shoot apical meristem (SAM). Regulates anther dehiscence and floral development. The polypeptide is Protein SHI RELATED SEQUENCE 7 (SRS7) (Arabidopsis thaliana (Mouse-ear cress)).